Consider the following 158-residue polypeptide: Ribosome-binding factor A (158 aa).

A disordered region spans residues 114–158; sequence AKDAEVRQVSTGAQYAGDADPYRKPEDEDEETDGSSEKNEGPASA. Over residues 148–158 the composition is skewed to basic and acidic residues; the sequence is SSEKNEGPASA.

Belongs to the RbfA family. In terms of assembly, monomer. Binds 30S ribosomal subunits, but not 50S ribosomal subunits or 70S ribosomes.

The protein resides in the cytoplasm. Functionally, one of several proteins that assist in the late maturation steps of the functional core of the 30S ribosomal subunit. Associates with free 30S ribosomal subunits (but not with 30S subunits that are part of 70S ribosomes or polysomes). Required for efficient processing of 16S rRNA. May interact with the 5'-terminal helix region of 16S rRNA. The protein is Ribosome-binding factor A of Streptomyces griseus subsp. griseus (strain JCM 4626 / CBS 651.72 / NBRC 13350 / KCC S-0626 / ISP 5235).